The following is a 329-amino-acid chain: Fructose-1,6-bisphosphatase class 1 (329 aa).

Mg(2+) is bound by residues Glu84, Asp103, Leu105, and Asp106. Residues 106–109 (DGSS), Asn196, and Lys262 contribute to the substrate site. Residue Glu268 coordinates Mg(2+).

It belongs to the FBPase class 1 family. As to quaternary structure, homotetramer. Requires Mg(2+) as cofactor.

The protein resides in the cytoplasm. The enzyme catalyses beta-D-fructose 1,6-bisphosphate + H2O = beta-D-fructose 6-phosphate + phosphate. It participates in carbohydrate biosynthesis; gluconeogenesis. The protein is Fructose-1,6-bisphosphatase class 1 of Shewanella sediminis (strain HAW-EB3).